A 142-amino-acid polypeptide reads, in one-letter code: Hemoglobin subunit theta-1 (142 aa).

Residues 2–142 form the Globin domain; it reads ALSAEDRALV…VISALASEYR (141 aa). H59 and H88 together coordinate heme b.

The protein belongs to the globin family.

This chain is Hemoglobin subunit theta-1 (HBQ1), found in Pongo pygmaeus (Bornean orangutan).